A 257-amino-acid polypeptide reads, in one-letter code: GTP cyclohydrolase FolE2 (257 aa).

The protein belongs to the GTP cyclohydrolase IV family.

The catalysed reaction is GTP + H2O = 7,8-dihydroneopterin 3'-triphosphate + formate + H(+). Its pathway is cofactor biosynthesis; 7,8-dihydroneopterin triphosphate biosynthesis; 7,8-dihydroneopterin triphosphate from GTP: step 1/1. In terms of biological role, converts GTP to 7,8-dihydroneopterin triphosphate. The chain is GTP cyclohydrolase FolE2 from Syntrophobacter fumaroxidans (strain DSM 10017 / MPOB).